The chain runs to 375 residues: Peptidyl-prolyl cis-trans isomerase D (375 aa).

In terms of domain architecture, PPIase cyclophilin-type spans 7–169 (YFDITIANEP…QEVTISSAGV (163 aa)). TPR repeat units lie at residues 217–250 (AGKLKEVGTKEFKAGNFAVALDKYQKALRYLDVH), 270–307 (LPLLTNAALCALKLPASPNTSSLVVSLTSRALTLPNLS), and 312–345 (GKALYRRAQAYVLKKDDEAAEKDLKGALECVPGD).

Belongs to the cyclophilin-type PPIase family. PPIase D subfamily.

The protein localises to the cytoplasm. The catalysed reaction is [protein]-peptidylproline (omega=180) = [protein]-peptidylproline (omega=0). Its function is as follows. PPIases accelerate the folding of proteins. It catalyzes the cis-trans isomerization of proline imidic peptide bonds in oligopeptides. This Cryptococcus neoformans var. neoformans serotype D (strain B-3501A) (Filobasidiella neoformans) protein is Peptidyl-prolyl cis-trans isomerase D (CPR6).